Reading from the N-terminus, the 113-residue chain is UPF0122 protein SSU98_0878 (113 aa).

Belongs to the UPF0122 family.

Functionally, might take part in the signal recognition particle (SRP) pathway. This is inferred from the conservation of its genetic proximity to ftsY/ffh. May be a regulatory protein. In Streptococcus suis (strain 98HAH33), this protein is UPF0122 protein SSU98_0878.